A 275-amino-acid chain; its full sequence is Rhamnulose-1-phosphate aldolase (275 aa).

The active site involves Glu117. Zn(2+) is bound by residues His141, His143, and His212.

This sequence belongs to the aldolase class II family. RhaD subfamily. As to quaternary structure, homotetramer. Zn(2+) is required as a cofactor.

The protein resides in the cytoplasm. It carries out the reaction L-rhamnulose 1-phosphate = (S)-lactaldehyde + dihydroxyacetone phosphate. Its pathway is carbohydrate degradation; L-rhamnose degradation; glycerone phosphate from L-rhamnose: step 3/3. Functionally, catalyzes the reversible cleavage of L-rhamnulose-1-phosphate to dihydroxyacetone phosphate (DHAP) and L-lactaldehyde. This Salmonella heidelberg (strain SL476) protein is Rhamnulose-1-phosphate aldolase.